The primary structure comprises 475 residues: Ribulose bisphosphate carboxylase large chain (475 aa).

Residues 1–2 (MS) constitute a propeptide that is removed on maturation. The residue at position 3 (Pro-3) is an N-acetylproline. N6,N6,N6-trimethyllysine is present on Lys-14. Positions 123 and 173 each coordinate substrate. The active-site Proton acceptor is Lys-175. Residue Lys-177 participates in substrate binding. Positions 201, 203, and 204 each coordinate Mg(2+). At Lys-201 the chain carries N6-carboxylysine. His-294 acts as the Proton acceptor in catalysis. 3 residues coordinate substrate: Arg-295, His-327, and Ser-379.

This sequence belongs to the RuBisCO large chain family. Type I subfamily. In terms of assembly, heterohexadecamer of 8 large chains and 8 small chains; disulfide-linked. The disulfide link is formed within the large subunit homodimers. It depends on Mg(2+) as a cofactor. Post-translationally, the disulfide bond which can form in the large chain dimeric partners within the hexadecamer appears to be associated with oxidative stress and protein turnover.

The protein resides in the plastid. The protein localises to the chloroplast. It carries out the reaction 2 (2R)-3-phosphoglycerate + 2 H(+) = D-ribulose 1,5-bisphosphate + CO2 + H2O. The enzyme catalyses D-ribulose 1,5-bisphosphate + O2 = 2-phosphoglycolate + (2R)-3-phosphoglycerate + 2 H(+). Its function is as follows. RuBisCO catalyzes two reactions: the carboxylation of D-ribulose 1,5-bisphosphate, the primary event in carbon dioxide fixation, as well as the oxidative fragmentation of the pentose substrate in the photorespiration process. Both reactions occur simultaneously and in competition at the same active site. This Spirogyra maxima (Green alga) protein is Ribulose bisphosphate carboxylase large chain.